Here is an 844-residue protein sequence, read N- to C-terminus: DNA mismatch repair protein MutS (844 aa).

610–617 contributes to the ATP binding site; that stretch reads GPNMGGKS.

The protein belongs to the DNA mismatch repair MutS family.

Its function is as follows. This protein is involved in the repair of mismatches in DNA. It is possible that it carries out the mismatch recognition step. This protein has a weak ATPase activity. This Francisella tularensis subsp. mediasiatica (strain FSC147) protein is DNA mismatch repair protein MutS.